The chain runs to 187 residues: UPF0232 protein MUL_0004 (187 aa).

Over residues Met1–Asp12 the composition is skewed to gly residues. Disordered stretches follow at residues Met1 to Gly77 and Ala166 to Gly187. Residues Ala14 to Ala30 show a composition bias toward basic and acidic residues. Low complexity predominate over residues Glu31 to Arg55.

This sequence belongs to the UPF0232 family.

This chain is UPF0232 protein MUL_0004, found in Mycobacterium ulcerans (strain Agy99).